The following is a 299-amino-acid chain: Methionyl-tRNA formyltransferase (299 aa).

109-112 (SLLP) provides a ligand contact to (6S)-5,6,7,8-tetrahydrofolate.

The protein belongs to the Fmt family.

The catalysed reaction is L-methionyl-tRNA(fMet) + (6R)-10-formyltetrahydrofolate = N-formyl-L-methionyl-tRNA(fMet) + (6S)-5,6,7,8-tetrahydrofolate + H(+). Attaches a formyl group to the free amino group of methionyl-tRNA(fMet). The formyl group appears to play a dual role in the initiator identity of N-formylmethionyl-tRNA by promoting its recognition by IF2 and preventing the misappropriation of this tRNA by the elongation apparatus. This Dinoroseobacter shibae (strain DSM 16493 / NCIMB 14021 / DFL 12) protein is Methionyl-tRNA formyltransferase.